Here is a 58-residue protein sequence, read N- to C-terminus: Succinate dehydrogenase subunit 8A, mitochondrial (58 aa).

As to quaternary structure, component of complex II composed of eight subunits in plants: four classical SDH subunits SDH1, SDH2, SDH3 and SDH4 (a flavoprotein (FP), an iron-sulfur protein (IP), and a cytochrome b composed of a large and a small subunit.), as well as four subunits unknown in mitochondria from bacteria and heterotrophic eukaryotes.

Its subcellular location is the mitochondrion inner membrane. The protein operates within carbohydrate metabolism; tricarboxylic acid cycle. This Oryza sativa subsp. japonica (Rice) protein is Succinate dehydrogenase subunit 8A, mitochondrial.